We begin with the raw amino-acid sequence, 443 residues long: Glutamyl-tRNA reductase (443 aa).

Residues 49–52 (TCNR), Ser109, 114–116 (EQQ), and Gln120 contribute to the substrate site. Residue Cys50 is the Nucleophile of the active site. 189 to 194 (GAGSMG) is a binding site for NADP(+).

It belongs to the glutamyl-tRNA reductase family. In terms of assembly, homodimer.

It catalyses the reaction (S)-4-amino-5-oxopentanoate + tRNA(Glu) + NADP(+) = L-glutamyl-tRNA(Glu) + NADPH + H(+). It functions in the pathway porphyrin-containing compound metabolism; protoporphyrin-IX biosynthesis; 5-aminolevulinate from L-glutamyl-tRNA(Glu): step 1/2. Catalyzes the NADPH-dependent reduction of glutamyl-tRNA(Glu) to glutamate 1-semialdehyde (GSA). The polypeptide is Glutamyl-tRNA reductase (Mycobacteroides abscessus (strain ATCC 19977 / DSM 44196 / CCUG 20993 / CIP 104536 / JCM 13569 / NCTC 13031 / TMC 1543 / L948) (Mycobacterium abscessus)).